The following is a 111-amino-acid chain: DNA-directed RNA polymerase subunit Rpo11 (111 aa).

This sequence belongs to the archaeal Rpo11/eukaryotic RPB11/RPC19 RNA polymerase subunit family. Part of the RNA polymerase complex.

The protein resides in the cytoplasm. It carries out the reaction RNA(n) + a ribonucleoside 5'-triphosphate = RNA(n+1) + diphosphate. DNA-dependent RNA polymerase (RNAP) catalyzes the transcription of DNA into RNA using the four ribonucleoside triphosphates as substrates. In Thermoplasma acidophilum (strain ATCC 25905 / DSM 1728 / JCM 9062 / NBRC 15155 / AMRC-C165), this protein is DNA-directed RNA polymerase subunit Rpo11.